The chain runs to 300 residues: Protoheme IX farnesyltransferase (300 aa).

9 helical membrane passes run 28–48 (VVAL…PTIL), 50–70 (VQPL…AAAL), 100–120 (ALIF…VFTN), 122–142 (LTAW…TAYL), 149–169 (NIVI…TAVT), 176–196 (ALLL…ALAI), 222–242 (CILL…LVGM), 243–263 (SGPL…YKAW), and 280–300 (FSIY…YLWA).

This sequence belongs to the UbiA prenyltransferase family. Protoheme IX farnesyltransferase subfamily.

It localises to the cell inner membrane. It carries out the reaction heme b + (2E,6E)-farnesyl diphosphate + H2O = Fe(II)-heme o + diphosphate. It participates in porphyrin-containing compound metabolism; heme O biosynthesis; heme O from protoheme: step 1/1. Its function is as follows. Converts heme B (protoheme IX) to heme O by substitution of the vinyl group on carbon 2 of heme B porphyrin ring with a hydroxyethyl farnesyl side group. In Shewanella oneidensis (strain ATCC 700550 / JCM 31522 / CIP 106686 / LMG 19005 / NCIMB 14063 / MR-1), this protein is Protoheme IX farnesyltransferase.